Here is a 739-residue protein sequence, read N- to C-terminus: MEHTYQYTLIIPFALLPVPMLIGVALIFFPTATKNVRRMWAFPSVLLLSIVMIFSFNLSIQQINGSSIYQYVCSWTINNDFSFEFGLLIDSLTSIMLILITTVGILVLIYSDNYMSHDQGYLRFFAYMSFSNISMLGLVTSSNLIQIHIFWELVGVCSYLLIGFWFTRPIAANACQKAFVTNRVGDFGLLLGILGFYWITGSFEFRDLFEIFNNLIYNNQVNSLFVILCASLLFVGAVAKSAQFPLHVWLPDAMEGPTPISALIHAATMVAAGIFLVARLLPLFTVIPYIMNIISLIGIITILLGATLALTQKDIKRSLAYSTMSQLGYIMLALGMGSYRAALFHLITHAYSKALLFLGSGSIIHSMESIVGYSPDKSQNMILMGGLKKYVPITKTAFFLGTLSLCGIPPLACFWSKDEIINDSWLYSPIFAIIACSTAGLTAFYMFRTYLLTFEGHLNVNLKNYSGKKTSSFYSICLWGKEGSKTIKKNYCLSTINNNEGDSFFSKNTYPMDGNVRNMTRPFITITHFDNKETFSYPHESDNNMLFPLLVLVLFTFFVGSIGIPFDQGRMDLDILSKWLTPSINLLHTNSNNSFDWYEFVKNSIFSVSIAYFGIFISSFLYRPIYSSLQNLELINSFVKMGPKRSLWDKIINVIYNWSYNRGYIDFFYSIALTRSIRVISELTHFFDRRVIDGITNGVGVTSFFVGEGVRYVGSGRISSYLFLYLFSVSIFFLIFQVL.

16 helical membrane passes run 9–29 (LIIP…LIFF), 40–60 (WAFP…NLSI), 89–109 (IDSL…LVLI), 125–145 (FAYM…SNLI), 147–167 (IHIF…FWFT), 185–205 (GDFG…SFEF), 224–244 (LFVI…SAQF), 258–278 (TPIS…FLVA), 283–303 (LFTV…ITIL), 327–347 (LGYI…FHLI), 354–374 (ALLF…VGYS), 396–416 (TAFF…CFWS), 425–445 (WLYS…TAFY), 546–566 (LFPL…GIPF), 605–625 (IFSV…YRPI), and 718–738 (ISSY…IFQV).

This sequence belongs to the complex I subunit 5 family. As to quaternary structure, NDH is composed of at least 16 different subunits, 5 of which are encoded in the nucleus.

The protein localises to the plastid. Its subcellular location is the chloroplast thylakoid membrane. The catalysed reaction is a plastoquinone + NADH + (n+1) H(+)(in) = a plastoquinol + NAD(+) + n H(+)(out). It carries out the reaction a plastoquinone + NADPH + (n+1) H(+)(in) = a plastoquinol + NADP(+) + n H(+)(out). Its function is as follows. NDH shuttles electrons from NAD(P)H:plastoquinone, via FMN and iron-sulfur (Fe-S) centers, to quinones in the photosynthetic chain and possibly in a chloroplast respiratory chain. The immediate electron acceptor for the enzyme in this species is believed to be plastoquinone. Couples the redox reaction to proton translocation, and thus conserves the redox energy in a proton gradient. In Buxus microphylla (Littleleaf boxwood), this protein is NAD(P)H-quinone oxidoreductase subunit 5, chloroplastic (ndhF).